Reading from the N-terminus, the 507-residue chain is Bifunctional purine biosynthesis protein PurH (507 aa).

The MGS-like domain maps to 1–149 (MSESKRIKTA…KNYNDVIIVA (149 aa)).

The protein belongs to the PurH family.

The enzyme catalyses (6R)-10-formyltetrahydrofolate + 5-amino-1-(5-phospho-beta-D-ribosyl)imidazole-4-carboxamide = 5-formamido-1-(5-phospho-D-ribosyl)imidazole-4-carboxamide + (6S)-5,6,7,8-tetrahydrofolate. It catalyses the reaction IMP + H2O = 5-formamido-1-(5-phospho-D-ribosyl)imidazole-4-carboxamide. The protein operates within purine metabolism; IMP biosynthesis via de novo pathway; 5-formamido-1-(5-phospho-D-ribosyl)imidazole-4-carboxamide from 5-amino-1-(5-phospho-D-ribosyl)imidazole-4-carboxamide (10-formyl THF route): step 1/1. Its pathway is purine metabolism; IMP biosynthesis via de novo pathway; IMP from 5-formamido-1-(5-phospho-D-ribosyl)imidazole-4-carboxamide: step 1/1. In Bacteroides thetaiotaomicron (strain ATCC 29148 / DSM 2079 / JCM 5827 / CCUG 10774 / NCTC 10582 / VPI-5482 / E50), this protein is Bifunctional purine biosynthesis protein PurH.